The primary structure comprises 252 residues: uncharacterized protein (252 aa).

It localises to the plastid. The protein resides in the chloroplast. This is an uncharacterized protein from Guillardia theta (Cryptophyte).